The chain runs to 280 residues: 30 kDa immediate-early protein 2 (280 aa).

The disordered stretch occupies residues 36–164 (SEEEQGEEVE…KKSKRISELD (129 aa)). 3 stretches are compositionally biased toward low complexity: residues 47-67 (RGAT…TSPT), 90-101 (SSSSSSCSSASD), and 132-147 (AASS…SSGG).

Its function is as follows. Activates the E1.7 promoter. This activation is augmented by the IE1 protein. It down-regulates the transcription of genes under the control of the major IE promoter. In Human cytomegalovirus (strain Towne) (HHV-5), this protein is 30 kDa immediate-early protein 2 (UL122).